The chain runs to 2290 residues: Protein Ycf2 (2290 aa).

A disordered region spans residues 505–530; that stretch reads GSNPTERSTRDQKSLKKQQDVSFVPP. Residues 511–523 show a composition bias toward basic and acidic residues; it reads RSTRDQKSLKKQQ. 1639–1646 is a binding site for ATP; sequence GSIGTGRS.

Belongs to the Ycf2 family.

It is found in the plastid. Its subcellular location is the chloroplast stroma. Probable ATPase of unknown function. Its presence in a non-photosynthetic plant (Epifagus virginiana) and experiments in tobacco indicate that it has an essential function which is probably not related to photosynthesis. The protein is Protein Ycf2 of Ceratophyllum demersum (Rigid hornwort).